We begin with the raw amino-acid sequence, 202 residues long: Superoxide dismutase [Mn] (202 aa).

His-27, His-82, Asp-164, and His-168 together coordinate Mn(2+).

This sequence belongs to the iron/manganese superoxide dismutase family. In terms of assembly, homodimer. Mn(2+) serves as cofactor.

The enzyme catalyses 2 superoxide + 2 H(+) = H2O2 + O2. Destroys superoxide anion radicals which are normally produced within the cells and which are toxic to biological systems. The polypeptide is Superoxide dismutase [Mn] (sodA) (Listeria ivanovii).